We begin with the raw amino-acid sequence, 319 residues long: R-phycoerythrin gamma chain, chloroplastic (319 aa).

Residues 1–71 (MDSPAFAVTG…RPKKLASYKR (71 aa)) constitute a chloroplast transit peptide. C96 and C135 together coordinate phycourobilin. C212 is a (2R,3E)-phycoerythrobilin binding site. C299 is a binding site for phycourobilin.

Heteromer of 4 alpha, 4 beta and one gamma chains. Post-translationally, contains four covalently linked bilin chromophores.

Its subcellular location is the plastid. It is found in the chloroplast thylakoid membrane. The sequence is that of R-phycoerythrin gamma chain, chloroplastic from Corallina officinalis (Coral seaweed).